The primary structure comprises 802 residues: Aldehyde dehydrogenase family 16 member A1 (802 aa).

Positions 513 to 554 are disordered; sequence SLPSGPETGPSPAPPYGLFVRGRFQSPGTQSSRPIKDSSGKV.

It belongs to the aldehyde dehydrogenase family. As to quaternary structure, interacts with SPG21.

In Rattus norvegicus (Rat), this protein is Aldehyde dehydrogenase family 16 member A1 (Aldh16a1).